A 508-amino-acid chain; its full sequence is Glycerol kinase (508 aa).

Thr-14 provides a ligand contact to ADP. Positions 14, 15, and 16 each coordinate ATP. Position 14 (Thr-14) interacts with sn-glycerol 3-phosphate. Residue Arg-18 coordinates ADP. Residues Arg-84, Glu-85, and Tyr-136 each contribute to the sn-glycerol 3-phosphate site. Glycerol contacts are provided by Arg-84, Glu-85, and Tyr-136. His-232 bears the Phosphohistidine; by HPr mark. Asp-246 provides a ligand contact to sn-glycerol 3-phosphate. Positions 246 and 247 each coordinate glycerol. Residues Thr-268 and Gly-311 each coordinate ADP. ATP is bound by residues Thr-268, Gly-311, Gln-315, and Gly-412. Residues Gly-412 and Asn-416 each contribute to the ADP site.

It belongs to the FGGY kinase family. Homotetramer and homodimer (in equilibrium). Post-translationally, the phosphoenolpyruvate-dependent sugar phosphotransferase system (PTS), including enzyme I, and histidine-containing protein (HPr) are required for the phosphorylation, which leads to the activation of the enzyme.

The enzyme catalyses glycerol + ATP = sn-glycerol 3-phosphate + ADP + H(+). It participates in polyol metabolism; glycerol degradation via glycerol kinase pathway; sn-glycerol 3-phosphate from glycerol: step 1/1. Activated by phosphorylation and inhibited by fructose 1,6-bisphosphate (FBP). Key enzyme in the regulation of glycerol uptake and metabolism. Catalyzes the phosphorylation of glycerol to yield sn-glycerol 3-phosphate. The protein is Glycerol kinase of Streptococcus pyogenes serotype M18 (strain MGAS8232).